The chain runs to 531 residues: Acid-sensing ion channel 3 (531 aa).

Residues 1–43 are Cytoplasmic-facing; it reads MKPTSGPEEARRPASDIRVFASNCSMHGLGHVFGPGSLSLRRG. Residues 44–61 form a helical membrane-spanning segment; that stretch reads MWAAAVVLSVATFLYQVA. At 62–441 the chain is on the extracellular side; sequence ERVRYYREFH…SELLGDIGGQ (380 aa). Cystine bridges form between Cys92–Cys186, Cys164–Cys171, Cys282–Cys370, Cys315–Cys366, Cys319–Cys364, Cys328–Cys350, and Cys330–Cys342. Asn175 is a glycosylation site (N-linked (GlcNAc...) asparagine). The disordered stretch occupies residues 285 to 307; it reads ASLNPNYEPEPSDPLGSPSPSPS. Asn398 carries N-linked (GlcNAc...) asparagine glycosylation. A helical membrane pass occupies residues 442-460; it reads MGLFIGASLLTILEILDYL. A GAS motif; ion selectivity filter motif is present at residues 447–449; sequence GAS. Residues 461 to 531 lie on the Cytoplasmic side of the membrane; the sequence is CEVFRDKVLG…HRTCYLVTQL (71 aa). A PDZ-binding motif is present at residues 528–531; it reads VTQL.

The protein belongs to the amiloride-sensitive sodium channel (TC 1.A.6) family. ASIC3 subfamily. Can form homotrimeric channels. Heterotrimer; forms functional heterotrimers producing channel with different properties. Forms heterotrimers with ASIC2; gives rise to a biphasic current with a sustained current which discriminates poorly between Na(+) and K(+). Interacts with STOM; inhibits ASIC3 acid-evoked current. Interacts with LIN7B (via PDZ domain); increases ASIC3 expression at the plasma membrane. Interacts with MAGI1 (via PDZ domain); probably regulates ASIC3. Interacts with GOPC (via PDZ domain); probably regulates ASIC3. Interacts with DLG4 (via PDZ domain); reduces ASIC3 expression at the plasma membrane. In terms of tissue distribution, expressed by sensory neurons. Strongly expressed in brain, spinal cord, lung, lymph nodes, kidney, pituitary, heart and testis.

It is found in the cell membrane. Its subcellular location is the cytoplasm. It carries out the reaction Na(+)(in) = Na(+)(out). The enzyme catalyses K(+)(in) = K(+)(out). The catalysed reaction is Ca(2+)(in) = Ca(2+)(out). With respect to regulation, inhibited by the diuretic drug amiloride. Inhibited by the diuretic drug triamterene. Potentiated by the vertebrate neuropeptide FF (NPFF) and the related FMRFamide. Specifically and reversibly inhibited by the a sea anemone toxin APETx2. Forms pH-gated heterotrimeric sodium channels that act as postsynaptic excitatory receptors in the nervous system. Upon extracellular acidification, these channels generate a biphasic current with a fast inactivating and a slow sustained phase. ASIC3 is more sensitive to protons and gates between closed, open, and desensitized states faster than other ASICs. Displays high selectivity for sodium ions but can also permit the permeation of other cations. As a neuronal acid sensor, probably contributes to mechanoreception, acid nociception, and heat nociception. By forming heterotrimeric channels with ASIC2, generates a biphasic current with a fast inactivating and a slow sustained phase, which in sensory neurons is proposed to mediate the pain induced by acidosis that occurs in ischemic, damaged or inflamed tissues. In Homo sapiens (Human), this protein is Acid-sensing ion channel 3.